We begin with the raw amino-acid sequence, 247 residues long: ATP synthase subunit a, chloroplastic (247 aa).

5 helical membrane-spanning segments follow: residues 38–58 (QVLI…IIAV), 95–115 (VPFI…GALL), 134–154 (INTT…AGLT), 199–219 (LVVV…VMFL), and 220–240 (GLFT…AYIG).

Belongs to the ATPase A chain family. F-type ATPases have 2 components, CF(1) - the catalytic core - and CF(0) - the membrane proton channel. CF(1) has five subunits: alpha(3), beta(3), gamma(1), delta(1), epsilon(1). CF(0) has four main subunits: a, b, b' and c.

The protein localises to the plastid. Its subcellular location is the chloroplast thylakoid membrane. In terms of biological role, key component of the proton channel; it plays a direct role in the translocation of protons across the membrane. The sequence is that of ATP synthase subunit a, chloroplastic from Dioscorea elephantipes (Elephant's foot yam).